We begin with the raw amino-acid sequence, 354 residues long: 4-hydroxy-3-methylbut-2-en-1-yl diphosphate synthase (flavodoxin) (354 aa).

4 residues coordinate [4Fe-4S] cluster: C262, C265, C297, and E304.

This sequence belongs to the IspG family. It depends on [4Fe-4S] cluster as a cofactor.

The enzyme catalyses (2E)-4-hydroxy-3-methylbut-2-enyl diphosphate + oxidized [flavodoxin] + H2O + 2 H(+) = 2-C-methyl-D-erythritol 2,4-cyclic diphosphate + reduced [flavodoxin]. The protein operates within isoprenoid biosynthesis; isopentenyl diphosphate biosynthesis via DXP pathway; isopentenyl diphosphate from 1-deoxy-D-xylulose 5-phosphate: step 5/6. In terms of biological role, converts 2C-methyl-D-erythritol 2,4-cyclodiphosphate (ME-2,4cPP) into 1-hydroxy-2-methyl-2-(E)-butenyl 4-diphosphate. The polypeptide is 4-hydroxy-3-methylbut-2-en-1-yl diphosphate synthase (flavodoxin) (Helicobacter hepaticus (strain ATCC 51449 / 3B1)).